A 122-amino-acid polypeptide reads, in one-letter code: Holo-[acyl-carrier-protein] synthase (122 aa).

2 residues coordinate Mg(2+): aspartate 8 and glutamate 56.

It belongs to the P-Pant transferase superfamily. AcpS family. Mg(2+) is required as a cofactor.

The protein localises to the cytoplasm. It carries out the reaction apo-[ACP] + CoA = holo-[ACP] + adenosine 3',5'-bisphosphate + H(+). Transfers the 4'-phosphopantetheine moiety from coenzyme A to a Ser of acyl-carrier-protein. The chain is Holo-[acyl-carrier-protein] synthase from Streptomyces griseus subsp. griseus (strain JCM 4626 / CBS 651.72 / NBRC 13350 / KCC S-0626 / ISP 5235).